The primary structure comprises 24 residues: Humanin-like 10 (24 aa).

It belongs to the humanin family. In terms of tissue distribution, expressed in mature brain, thyroid gland and testis.

Its subcellular location is the secreted. The protein localises to the cytoplasm. Plays a role as a neuroprotective and antiapoptotic factor. The sequence is that of Humanin-like 10 from Homo sapiens (Human).